Reading from the N-terminus, the 121-residue chain is Small ribosomal subunit protein uS13 (121 aa).

Residues 91–121 (HRMSLPVRGQRTRTNARTRRGSRKTVAGRKK) form a disordered region. Basic residues predominate over residues 100–121 (QRTRTNARTRRGSRKTVAGRKK).

Belongs to the universal ribosomal protein uS13 family. Part of the 30S ribosomal subunit. Forms a loose heterodimer with protein S19. Forms two bridges to the 50S subunit in the 70S ribosome.

Located at the top of the head of the 30S subunit, it contacts several helices of the 16S rRNA. In the 70S ribosome it contacts the 23S rRNA (bridge B1a) and protein L5 of the 50S subunit (bridge B1b), connecting the 2 subunits; these bridges are implicated in subunit movement. Contacts the tRNAs in the A and P-sites. This chain is Small ribosomal subunit protein uS13, found in Prochlorococcus marinus (strain SARG / CCMP1375 / SS120).